A 261-amino-acid polypeptide reads, in one-letter code: Acidic leucine-rich nuclear phosphoprotein 32 family member B (261 aa).

4 LRR repeats span residues 16–40 (PAAV…LTAE), 43–64 (NLEF…PKLP), 65–87 (KLKK…AEKL), and 89–110 (NLTH…EPLK). Lys86 is modified (N6-acetyllysine). The 39-residue stretch at 123–161 (CEVTNLNDYRESVFKLLPQLTYLDGYDREDREAPDSDAE) folds into the LRRCT domain. The interval 149-261 (DREDREAPDS…RETDDEGEDD (113 aa)) is disordered. Residues 157 to 243 (DSDAEVDGVD…DEDEDEEEEE (87 aa)) are compositionally biased toward acidic residues. Position 158 is a phosphoserine (Ser158). Basic and acidic residues predominate over residues 244-254 (SGKGEKRKRET). A Nuclear localization signal motif is present at residues 249 to 252 (KRKR). Residue Thr254 is modified to Phosphothreonine.

It belongs to the ANP32 family. In terms of assembly, interacts with histones H3 and H4. Interacts with KLF5; this interaction induces promoter region-specific histone incorporation and inhibition of histone acetylation by ANP32B. Post-translationally, some Glu residues are glycylated by TTLL8; a modification that generates a side chains of glycine on the gamma-carboxyl groups of specific glutamate residues. In terms of processing, directly cleaved by caspase-3/CASP3.

Its subcellular location is the nucleus. Its function is as follows. Multifunctional protein that is involved in the regulation of many processes including cell proliferation, apoptosis, cell cycle progression or transcription. Regulates the proliferation of neuronal stem cells, differentiation of leukemic cells and progression from G1 to S phase of the cell cycle. As negative regulator of caspase-3-dependent apoptosis, may act as an antagonist of ANP32A in regulating tissue homeostasis. Exhibits histone chaperone properties, able to recruit histones to certain promoters, thus regulating the transcription of specific genes. Also plays an essential role in the nucleocytoplasmic transport of specific mRNAs via the uncommon nuclear mRNA export receptor XPO1/CRM1. Participates in the regulation of adequate adaptive immune responses by acting on mRNA expression and cell proliferation. In Bos taurus (Bovine), this protein is Acidic leucine-rich nuclear phosphoprotein 32 family member B (ANP32B).